Consider the following 38-residue polypeptide: Plastocyanin (38 aa).

Residues 1 to 38 (AQTVEVKMGADGGLLVFEPAKAGPHNVVFDEDNIPPGV) enclose the Plastocyanin-like domain. H25 is a binding site for Cu cation.

The protein belongs to the plastocyanin family. Cu(2+) serves as cofactor.

It is found in the plastid. It localises to the chloroplast thylakoid membrane. Its function is as follows. Participates in electron transfer between P700 and the cytochrome b6-f complex in photosystem I. The chain is Plastocyanin (PETE) from Thalassiosira oceanica (Marine diatom).